Here is a 358-residue protein sequence, read N- to C-terminus: 3-dehydroquinate synthase (358 aa).

NAD(+) is bound by residues 70–75 (DGEQFK), 104–108 (GVIGD), 128–129 (TT), K141, K150, and 168–171 (CLHT). 3 residues coordinate Zn(2+): E183, H246, and H263.

It belongs to the sugar phosphate cyclases superfamily. Dehydroquinate synthase family. Requires Co(2+) as cofactor. Zn(2+) serves as cofactor. It depends on NAD(+) as a cofactor.

It localises to the cytoplasm. The catalysed reaction is 7-phospho-2-dehydro-3-deoxy-D-arabino-heptonate = 3-dehydroquinate + phosphate. Its pathway is metabolic intermediate biosynthesis; chorismate biosynthesis; chorismate from D-erythrose 4-phosphate and phosphoenolpyruvate: step 2/7. Functionally, catalyzes the conversion of 3-deoxy-D-arabino-heptulosonate 7-phosphate (DAHP) to dehydroquinate (DHQ). In Shewanella baltica (strain OS195), this protein is 3-dehydroquinate synthase.